The primary structure comprises 203 residues: MKKWLAISCLIAGVTSTAVYADAAKDLQGRLNKVNSFHANFSQKVTSTDGAAVQEGEGELWLKRPNLFNWKTTSPDESALISDGKTLWFYNPFVEQVTATWLKDATGNTPFILITRNDTSDWNKYDVRQKGDDFELTPKSASGNLKQFAINVTTNGTIKQFTATEQDGQRSTYVLRNQQNGVVDAAQFTFTPPKGVTLDDQRQ.

The signal sequence occupies residues 1–21 (MKKWLAISCLIAGVTSTAVYA).

Belongs to the LolA family. Monomer.

The protein resides in the periplasm. Participates in the translocation of lipoproteins from the inner membrane to the outer membrane. Only forms a complex with a lipoprotein if the residue after the N-terminal Cys is not an aspartate (The Asp acts as a targeting signal to indicate that the lipoprotein should stay in the inner membrane). The chain is Outer-membrane lipoprotein carrier protein from Pectobacterium atrosepticum (strain SCRI 1043 / ATCC BAA-672) (Erwinia carotovora subsp. atroseptica).